The chain runs to 257 residues: Transcription factor bHLH55 (257 aa).

A bHLH domain is found at 74-126 (NKRAKHKELERQRRQENTSLFKILRYLLPSQYIKGKRSSADHVLEAVNYIKDL).

In terms of assembly, homodimer. In terms of tissue distribution, expressed in roots, leaves, stems, and flowers.

It is found in the nucleus. This Arabidopsis thaliana (Mouse-ear cress) protein is Transcription factor bHLH55 (BHLH55).